Here is a 327-residue protein sequence, read N- to C-terminus: Phenylalanine--tRNA ligase alpha subunit (327 aa).

E252 provides a ligand contact to Mg(2+).

Belongs to the class-II aminoacyl-tRNA synthetase family. Phe-tRNA synthetase alpha subunit type 1 subfamily. Tetramer of two alpha and two beta subunits. Mg(2+) serves as cofactor.

Its subcellular location is the cytoplasm. The enzyme catalyses tRNA(Phe) + L-phenylalanine + ATP = L-phenylalanyl-tRNA(Phe) + AMP + diphosphate + H(+). The sequence is that of Phenylalanine--tRNA ligase alpha subunit from Yersinia pestis bv. Antiqua (strain Antiqua).